Here is a 113-residue protein sequence, read N- to C-terminus: Dolichyl-diphosphooligosaccharide--protein glycosyltransferase subunit DAD1 (113 aa).

An N-acetylserine modification is found at serine 2. At 2-30 (SASVVSVISRFLEEYLSSTPQRLKLLDAY) the chain is on the cytoplasmic side. Residues 31 to 51 (LLYILLTGALQFGYCLLVGTF) form a helical membrane-spanning segment. Position 52 (proline 52) is a topological domain, lumenal. A helical membrane pass occupies residues 53–73 (FNSFLSGFISCVGSFILAVCL). Residues 74 to 92 (RIQINPQNKADFQGISPER) lie on the Cytoplasmic side of the membrane. A helical transmembrane segment spans residues 93–113 (AFADFLFASTILHLVVMNFVG).

The protein belongs to the DAD/OST2 family. In terms of assembly, component of the oligosaccharyltransferase (OST) complex. OST exists in two different complex forms which contain common core subunits RPN1, RPN2, OST48, OST4, DAD1 and TMEM258, either STT3A or STT3B as catalytic subunits, and form-specific accessory subunits. STT3A complex assembly occurs through the formation of 3 subcomplexes. Subcomplex 1 contains RPN1 and TMEM258, subcomplex 2 contains the STT3A-specific subunits STT3A, DC2/OSTC, and KCP2 as well as the core subunit OST4, and subcomplex 3 contains RPN2, DAD1, and OST48. The STT3A complex can form stable complexes with the Sec61 complex or with both the Sec61 and TRAP complexes.

It is found in the endoplasmic reticulum membrane. The protein operates within protein modification; protein glycosylation. Its function is as follows. Subunit of the oligosaccharyl transferase (OST) complex that catalyzes the initial transfer of a defined glycan (Glc(3)Man(9)GlcNAc(2) in eukaryotes) from the lipid carrier dolichol-pyrophosphate to an asparagine residue within an Asn-X-Ser/Thr consensus motif in nascent polypeptide chains, the first step in protein N-glycosylation. N-glycosylation occurs cotranslationally and the complex associates with the Sec61 complex at the channel-forming translocon complex that mediates protein translocation across the endoplasmic reticulum (ER). All subunits are required for a maximal enzyme activity. The chain is Dolichyl-diphosphooligosaccharide--protein glycosyltransferase subunit DAD1 from Mus musculus (Mouse).